Reading from the N-terminus, the 194-residue chain is Ribonuclease HII (194 aa).

An RNase H type-2 domain is found at 3-193 (ILTAGVDEAG…VRNLLAQQAL (191 aa)). Aspartate 9, glutamate 10, and aspartate 101 together coordinate a divalent metal cation.

The protein belongs to the RNase HII family. Mn(2+) is required as a cofactor. It depends on Mg(2+) as a cofactor.

It is found in the cytoplasm. The catalysed reaction is Endonucleolytic cleavage to 5'-phosphomonoester.. Endonuclease that specifically degrades the RNA of RNA-DNA hybrids. The sequence is that of Ribonuclease HII (rnhB) from Neisseria meningitidis serogroup A / serotype 4A (strain DSM 15465 / Z2491).